The chain runs to 620 residues: Dihydroxy-acid dehydratase (620 aa).

Position 81 (Asp-81) interacts with Mg(2+). Cys-122 contacts [2Fe-2S] cluster. Mg(2+) is bound by residues Asp-123 and Lys-124. Lys-124 is modified (N6-carboxylysine). [2Fe-2S] cluster is bound at residue Cys-195. Glu-491 contacts Mg(2+). Catalysis depends on Ser-517, which acts as the Proton acceptor.

The protein belongs to the IlvD/Edd family. In terms of assembly, homodimer. [2Fe-2S] cluster is required as a cofactor. Requires Mg(2+) as cofactor.

The enzyme catalyses (2R)-2,3-dihydroxy-3-methylbutanoate = 3-methyl-2-oxobutanoate + H2O. It carries out the reaction (2R,3R)-2,3-dihydroxy-3-methylpentanoate = (S)-3-methyl-2-oxopentanoate + H2O. It functions in the pathway amino-acid biosynthesis; L-isoleucine biosynthesis; L-isoleucine from 2-oxobutanoate: step 3/4. The protein operates within amino-acid biosynthesis; L-valine biosynthesis; L-valine from pyruvate: step 3/4. In terms of biological role, functions in the biosynthesis of branched-chain amino acids. Catalyzes the dehydration of (2R,3R)-2,3-dihydroxy-3-methylpentanoate (2,3-dihydroxy-3-methylvalerate) into 2-oxo-3-methylpentanoate (2-oxo-3-methylvalerate) and of (2R)-2,3-dihydroxy-3-methylbutanoate (2,3-dihydroxyisovalerate) into 2-oxo-3-methylbutanoate (2-oxoisovalerate), the penultimate precursor to L-isoleucine and L-valine, respectively. The polypeptide is Dihydroxy-acid dehydratase (Colwellia psychrerythraea (strain 34H / ATCC BAA-681) (Vibrio psychroerythus)).